The chain runs to 629 residues: Glutamyl-tRNA(Gln) amidotransferase subunit E (629 aa).

The tract at residues 405–426 is disordered; sequence PEETRRALPDGNTQYMRPLPGK.

The protein belongs to the GatB/GatE family. GatE subfamily. In terms of assembly, heterodimer of GatD and GatE.

The enzyme catalyses L-glutamyl-tRNA(Gln) + L-glutamine + ATP + H2O = L-glutaminyl-tRNA(Gln) + L-glutamate + ADP + phosphate + H(+). In terms of biological role, allows the formation of correctly charged Gln-tRNA(Gln) through the transamidation of misacylated Glu-tRNA(Gln) in organisms which lack glutaminyl-tRNA synthetase. The reaction takes place in the presence of glutamine and ATP through an activated gamma-phospho-Glu-tRNA(Gln). The GatDE system is specific for glutamate and does not act on aspartate. This chain is Glutamyl-tRNA(Gln) amidotransferase subunit E, found in Thermococcus sibiricus (strain DSM 12597 / MM 739).